The sequence spans 213 residues: Andrastin A biosynthesis cluster protein B (213 aa).

Part of the gene cluster that mediates the biosynthesis of andrastins, meroterpenoid compounds that exhibit inhibitory activity against ras farnesyltransferase, suggesting that they could be promising leads for antitumor agents. The first step of the pathway is the synthesis of 3,5-dimethylorsellinic acid (DMOA) by the polyketide synthase adrD via condensation of one acetyl-CoA starter unit with 3 malonyl-CoA units and 2 methylations. DMAO is then converted to farnesyl-DMAO by the prenyltransferase adrG. The methyltransferase adrK catalyzes the methylation of the carboxyl group of farnesyl-DMAO to farnesyl-DMAO methyl ester which is further converted to epoxyfarnesyl-DMAO methyl ester by the FAD-dependent monooxygenase adrH. The terpene cyclase adrI then catalyzes the carbon skeletal rearrangement to generate the andrastin E, the first compound in the pathway having the andrastin scaffold, with the tetracyclic ring system. The post-cyclization tailoring enzymes adrF, adrE, adrJ, and adrA, are involved in the conversion of andrastin E into andrastin A. The short chain dehydrogenase adrF is responsible for the oxidation of the C-3 a hydroxyl group of andrastin E to yield the corresponding ketone, andrastin D. The ketoreductase adrE stereoselectively reduces the carbonyl moiety to reverse the stereochemistry of the C-3 position to yield andrastin F. The acetyltransferase adrJ is the acetyltransferase that attaches the acetyl group to the C-3 hydroxyl group of andrastin F to yield andrastin C. Finally, the cytochrome P450 monooxygenase adrA catalyzes two sequential oxidation reactions of the C-23 methyl group, to generate the corresponding alcohol andrastin B, and aldehyde andrastin A. This Penicillium rubens (strain ATCC 28089 / DSM 1075 / NRRL 1951 / Wisconsin 54-1255) (Penicillium chrysogenum) protein is Andrastin A biosynthesis cluster protein B.